We begin with the raw amino-acid sequence, 202 residues long: MSAQEIKGLGMIPMVIEQSGRGERSYDIYSRLLKERIIFLVGEVNDQTANLVVAQLLFLESENPDKDISFYINSPGGSVSAGMAIYDTMQFIKPDVSTMCIGFAASMGAFLLAAGEKGKRFSLPNSKIMIHQVLGGARGQATDIEIHARDILRTKDQMNRILAERTGQPLEKVKSDTERDYFLTADEAKDYGLVDQVIAKRS.

The active-site Nucleophile is the serine 106. The active site involves histidine 131.

This sequence belongs to the peptidase S14 family. In terms of assembly, fourteen ClpP subunits assemble into 2 heptameric rings which stack back to back to give a disk-like structure with a central cavity, resembling the structure of eukaryotic proteasomes.

It is found in the cytoplasm. It catalyses the reaction Hydrolysis of proteins to small peptides in the presence of ATP and magnesium. alpha-casein is the usual test substrate. In the absence of ATP, only oligopeptides shorter than five residues are hydrolyzed (such as succinyl-Leu-Tyr-|-NHMec, and Leu-Tyr-Leu-|-Tyr-Trp, in which cleavage of the -Tyr-|-Leu- and -Tyr-|-Trp bonds also occurs).. In terms of biological role, cleaves peptides in various proteins in a process that requires ATP hydrolysis. Has a chymotrypsin-like activity. Plays a major role in the degradation of misfolded proteins. This chain is ATP-dependent Clp protease proteolytic subunit, found in Variovorax paradoxus (strain S110).